The sequence spans 225 residues: Protein NrfC homolog (225 aa).

Positions 1–28 (MTVCSRRNFVSGMGAVILMTGTSLPAFA) form a signal peptide, tat-type signal. 4Fe-4S ferredoxin-type domains lie at 39–67 (YAMI…VPEG), 85–116 (QEYE…IDKE), and 118–147 (GIVD…IHPI). The [4Fe-4S] cluster site is built by Cys48, Cys51, Cys54, Cys58, Cys94, Cys97, Cys102, Cys106, Cys127, Cys130, Cys133, Cys137, Cys154, Cys157, Cys170, and Cys174.

In terms of processing, predicted to be exported by the Tat system. The position of the signal peptide cleavage has not been experimentally proven.

Probably involved in the transfer of electrons from the quinone pool to the type-c cytochromes. In Haemophilus influenzae (strain ATCC 51907 / DSM 11121 / KW20 / Rd), this protein is Protein NrfC homolog (nrfC).